We begin with the raw amino-acid sequence, 222 residues long: Flagellar L-ring protein (222 aa).

The signal sequence occupies residues 1–21 (MQTFLYPRTWLILGLLLLGSG). C22 carries the N-palmitoyl cysteine lipid modification. C22 carries S-diacylglycerol cysteine lipidation.

The protein belongs to the FlgH family. In terms of assembly, the basal body constitutes a major portion of the flagellar organelle and consists of four rings (L,P,S, and M) mounted on a central rod.

The protein resides in the cell outer membrane. The protein localises to the bacterial flagellum basal body. Functionally, assembles around the rod to form the L-ring and probably protects the motor/basal body from shearing forces during rotation. This is Flagellar L-ring protein from Methylobacillus flagellatus (strain ATCC 51484 / DSM 6875 / VKM B-1610 / KT).